The following is a 396-amino-acid chain: Tryptophan synthase beta chain (396 aa).

Lys-86 is modified (N6-(pyridoxal phosphate)lysine).

The protein belongs to the TrpB family. As to quaternary structure, tetramer of two alpha and two beta chains. The cofactor is pyridoxal 5'-phosphate.

It catalyses the reaction (1S,2R)-1-C-(indol-3-yl)glycerol 3-phosphate + L-serine = D-glyceraldehyde 3-phosphate + L-tryptophan + H2O. It participates in amino-acid biosynthesis; L-tryptophan biosynthesis; L-tryptophan from chorismate: step 5/5. In terms of biological role, the beta subunit is responsible for the synthesis of L-tryptophan from indole and L-serine. In Vibrio cholerae serotype O1 (strain ATCC 39315 / El Tor Inaba N16961), this protein is Tryptophan synthase beta chain.